The following is a 309-amino-acid chain: Methionyl-tRNA formyltransferase (309 aa).

112–115 (SLLP) is a binding site for (6S)-5,6,7,8-tetrahydrofolate.

It belongs to the Fmt family.

It catalyses the reaction L-methionyl-tRNA(fMet) + (6R)-10-formyltetrahydrofolate = N-formyl-L-methionyl-tRNA(fMet) + (6S)-5,6,7,8-tetrahydrofolate + H(+). Attaches a formyl group to the free amino group of methionyl-tRNA(fMet). The formyl group appears to play a dual role in the initiator identity of N-formylmethionyl-tRNA by promoting its recognition by IF2 and preventing the misappropriation of this tRNA by the elongation apparatus. This is Methionyl-tRNA formyltransferase from Bartonella tribocorum (strain CIP 105476 / IBS 506).